The chain runs to 82 residues: Precursor of CEP3 (82 aa).

An N-terminal signal peptide occupies residues 1 to 24 (MATINVYVFAFIFLLTISVGSIEG). Positions 25 to 63 (RKLTKFTVTTSEEIRAGGSVLSSSPPTEPLESPPSHGVD) are excised as a propeptide. The tract at residues 40-82 (AGGSVLSSSPPTEPLESPPSHGVDTFRPTEPGHSPGIGHSVHN) is disordered. A hydroxyproline mark is found at Pro67, Pro70, and Pro74. The propeptide occupies 79-82 (SVHN).

It belongs to the C-terminally encoded plant signaling peptide (CEP) family. Interacts with the CEP receptor CEPR1. The mature small signaling peptide is generated by proteolytic processing of the longer precursor. As to expression, mostly expressed in roots. Present in lateral roots (especially in vasculature), root-hypocotyl junction and cotyledons.

It is found in the secreted. The protein resides in the extracellular space. It localises to the apoplast. In terms of biological role, extracellular signaling peptide that represses primary root growth rate and significantly inhibits lateral root formation. Promotes shoot growth. Modulates leaf morphology. Regulates systemic nitrogen (N)-demand signaling. Mediates systemic up-regulation of genes involved in N uptake and assimilation pathways. This chain is Precursor of CEP3, found in Arabidopsis thaliana (Mouse-ear cress).